A 753-amino-acid chain; its full sequence is Striatin-4 (753 aa).

Positions 10 to 65 are disordered; the sequence is VAAAASSCRPLGSGAGPGPTGAAPVSAPAPGPGPAGKGGGGGGSPGPTAGPEPLSL. Residues 43-54 show a composition bias toward gly residues; the sequence is PAGKGGGGGGSP. S53 carries the post-translational modification Phosphoserine. Residues 69–136 adopt a coiled-coil conformation; the sequence is LHFIQHEWAR…QERAKYHKLK (68 aa). Positions 71–79 are caveolin-binding; the sequence is FIQHEWARF. Residues 165-182 form a calmodulin-binding region; that stretch reads ENSPLVWKEGRQLLRQYL. S206 carries the phosphoserine modification. 3 disordered regions span residues 213–232, 271–345, and 363–382; these read VEPSEGAPRAPPGPAGLSGG, CEDE…SPHE, and VDGLPPKVTGPPPGTPQPRP. Composition is skewed to acidic residues over residues 271-283 and 302-317; these read CEDEDSDEDDELD and EMEDEDEEDDSEDAIN. Position 276 is a phosphoserine (S276). Over residues 332 to 345 the composition is skewed to basic and acidic residues; that stretch reads PDPRRCTVDGSPHE. Pro residues predominate over residues 370-380; the sequence is VTGPPPGTPQP. WD repeat units lie at residues 436 to 475, 489 to 528, 542 to 581, 587 to 628, 635 to 674, 677 to 716, and 723 to 753; these read SHYDGIRSLAFHHSQSALLTASEDGTLKLWNLQKAVTAKK, AHRGPVLAVAMGSNSEYCYSGGADACIHSWKIPDLSMDPY, GHGDAVWGLAFSPTSQRLASCSADGTVRIWDPSSSSPACL, ASEH…ALLT, SGPTQINQVVSHPNQPLTITAHDDRGIRFLDNRTGKPVHS, AHLDAVTCLAVDPNGAFLMSGSHDCSLRLWSLDNKTCVQE, and KHEEAIHAVACHPSKALIASAGADALAKVFV.

This sequence belongs to the WD repeat striatin family. Part of the core of STRIPAK complexes composed of PP2A catalytic and scaffolding subunits, the striatins (PP2A regulatory subunits), the striatin-associated proteins MOB4, STRIP1 and STRIP2, PDCD10 and members of the STE20 kinases, such as STK24 and STK26. Interacts with CTTNBP2NL.

The protein resides in the cytoplasm. Calmodulin-binding scaffolding protein which is the center of the striatin-interacting phosphatase and kinase (STRIPAK) complexes. STRIPAK complexes have critical roles in protein (de)phosphorylation and are regulators of multiple signaling pathways including Hippo, MAPK, nuclear receptor and cytoskeleton remodeling. Different types of STRIPAK complexes are involved in a variety of biological processes such as cell growth, differentiation, apoptosis, metabolism and immune regulation. Key regulator of the expanded Hippo signaling pathway by interacting and allowing the inhibition of MAP4K kinases by the STRIPAK complex. In Homo sapiens (Human), this protein is Striatin-4.